A 562-amino-acid polypeptide reads, in one-letter code: NAD-dependent malic enzyme (562 aa).

Tyr101 acts as the Proton donor in catalysis. NAD(+) is bound at residue Arg154. Lys172 (proton acceptor) is an active-site residue. The a divalent metal cation site is built by Glu243, Asp244, and Asp267. NAD(+)-binding residues include Asp267 and Asn415.

Belongs to the malic enzymes family. In terms of assembly, homotetramer. It depends on Mg(2+) as a cofactor. The cofactor is Mn(2+).

The catalysed reaction is (S)-malate + NAD(+) = pyruvate + CO2 + NADH. It carries out the reaction oxaloacetate + H(+) = pyruvate + CO2. The sequence is that of NAD-dependent malic enzyme from Idiomarina loihiensis (strain ATCC BAA-735 / DSM 15497 / L2-TR).